A 214-amino-acid chain; its full sequence is Thymidylate kinase (214 aa).

An ATP-binding site is contributed by 7-14 (GIEGAGKT).

This sequence belongs to the thymidylate kinase family.

The enzyme catalyses dTMP + ATP = dTDP + ADP. In terms of biological role, phosphorylation of dTMP to form dTDP in both de novo and salvage pathways of dTTP synthesis. The chain is Thymidylate kinase from Desulfosudis oleivorans (strain DSM 6200 / JCM 39069 / Hxd3) (Desulfococcus oleovorans).